A 505-amino-acid chain; its full sequence is ATP synthase subunit beta (505 aa).

158 to 165 (GGAGVGKT) contacts ATP.

Belongs to the ATPase alpha/beta chains family. In terms of assembly, F-type ATPases have 2 components, CF(1) - the catalytic core - and CF(0) - the membrane proton channel. CF(1) has five subunits: alpha(3), beta(3), gamma(1), delta(1), epsilon(1). CF(0) has three main subunits: a(1), b(2) and c(9-12). The alpha and beta chains form an alternating ring which encloses part of the gamma chain. CF(1) is attached to CF(0) by a central stalk formed by the gamma and epsilon chains, while a peripheral stalk is formed by the delta and b chains.

Its subcellular location is the cell inner membrane. It carries out the reaction ATP + H2O + 4 H(+)(in) = ADP + phosphate + 5 H(+)(out). Functionally, produces ATP from ADP in the presence of a proton gradient across the membrane. The catalytic sites are hosted primarily by the beta subunits. The protein is ATP synthase subunit beta of Parabacteroides distasonis (strain ATCC 8503 / DSM 20701 / CIP 104284 / JCM 5825 / NCTC 11152).